Here is a 313-residue protein sequence, read N- to C-terminus: Acetaldehyde dehydrogenase 3 (313 aa).

13–16 lines the NAD(+) pocket; the sequence is SGNI. Residue cysteine 133 is the Acyl-thioester intermediate of the active site. Residues 164 to 172 and asparagine 291 each bind NAD(+); that span reads SAGPGTRAN.

Belongs to the acetaldehyde dehydrogenase family.

The enzyme catalyses acetaldehyde + NAD(+) + CoA = acetyl-CoA + NADH + H(+). The sequence is that of Acetaldehyde dehydrogenase 3 from Paraburkholderia xenovorans (strain LB400).